We begin with the raw amino-acid sequence, 439 residues long: MMAASASATTMLLKYPTTVCGIPNPSSNNNNDPSNNIVSIPQNTTNPTLKSRTPNKITTNAVAAPSFPSLTTTTPSSIQSLVHEFDPQIPPEDAHTPPSSWYTEPAFYSHELERIFYKGWQVAGISDQIKEPNQYFTGSLGNVEYLVSRDGEGKVHAFHNVCTHRASILACGSGKKSCFVCPYHGWVYGMDGSLAKASKAKPEQNLDPKELGLVPLKVAVWGPFVLISLDRSLEEGGDVGTEWLGTSAEDVKAHAFDPSLQFIHRSEFPMESNWKIFSDNYLDSSYHVPYAHKYYATELNFDTYDTQMIENVTIQRVEGSSNKPDGFDRVGIQAFYAFAYPNFAVERYGPWMTTMHIHPLGPRKCKLVVDYYIENSMLDDKDYIEKGIAINDNVQREDVVLCESVQRGLETPAYRSGRYVMPIEKGIHHFHCWLQQTLK.

A chloroplast-targeting transit peptide spans 1–60; the sequence is MMAASASATTMLLKYPTTVCGIPNPSSNNNNDPSNNIVSIPQNTTNPTLKSRTPNKITTN. Over residues 24–41 the composition is skewed to low complexity; that stretch reads NPSSNNNNDPSNNIVSIP. Residues 24–54 form a disordered region; the sequence is NPSSNNNNDPSNNIVSIPQNTTNPTLKSRTP. Positions 42–54 are enriched in polar residues; the sequence is QNTTNPTLKSRTP. The Rieske domain occupies 120-227; sequence WQVAGISDQI…VAVWGPFVLI (108 aa). [2Fe-2S] cluster is bound by residues C162, H164, C181, and H184. Residues H287 and H292 each contribute to the Fe cation site.

Homotrimer or homodimer. The cofactor is [2Fe-2S] cluster. Fe cation is required as a cofactor. It depends on Mg(2+) as a cofactor. As to expression, expressed in leaves.

It localises to the plastid. Its subcellular location is the chloroplast stroma. It catalyses the reaction choline + 2 reduced [2Fe-2S]-[ferredoxin] + O2 + 2 H(+) = betaine aldehyde hydrate + 2 oxidized [2Fe-2S]-[ferredoxin] + H2O. The protein operates within amine and polyamine biosynthesis; betaine biosynthesis via choline pathway; betaine aldehyde from choline (monooxygenase route): step 1/1. In terms of biological role, catalyzes the first step of the osmoprotectant glycine betaine synthesis. This chain is Choline monooxygenase, chloroplastic (CMO), found in Spinacia oleracea (Spinach).